A 207-amino-acid chain; its full sequence is Thymidylate kinase (207 aa).

7-14 lines the ATP pocket; it reads GCEGTGKT.

This sequence belongs to the thymidylate kinase family.

It catalyses the reaction dTMP + ATP = dTDP + ADP. In terms of biological role, phosphorylation of dTMP to form dTDP in both de novo and salvage pathways of dTTP synthesis. The chain is Thymidylate kinase from Onion yellows phytoplasma (strain OY-M).